Consider the following 82-residue polypeptide: Exodeoxyribonuclease 7 small subunit (82 aa).

The protein belongs to the XseB family. As to quaternary structure, heterooligomer composed of large and small subunits.

The protein resides in the cytoplasm. The enzyme catalyses Exonucleolytic cleavage in either 5'- to 3'- or 3'- to 5'-direction to yield nucleoside 5'-phosphates.. In terms of biological role, bidirectionally degrades single-stranded DNA into large acid-insoluble oligonucleotides, which are then degraded further into small acid-soluble oligonucleotides. The chain is Exodeoxyribonuclease 7 small subunit from Pectobacterium carotovorum subsp. carotovorum (strain PC1).